The sequence spans 106 residues: EspC protein homolog (106 aa).

This sequence belongs to the EspC family.

In Mycobacterium leprae (strain TN), this protein is EspC protein homolog.